The following is a 257-amino-acid chain: Ribonuclease HII (257 aa).

Residues 72-257 (TYIAGIDEVG…FAPIKDMIQK (186 aa)) form the RNase H type-2 domain. Residues aspartate 78, glutamate 79, and aspartate 170 each coordinate a divalent metal cation.

Belongs to the RNase HII family. The cofactor is Mn(2+). Requires Mg(2+) as cofactor.

The protein resides in the cytoplasm. It catalyses the reaction Endonucleolytic cleavage to 5'-phosphomonoester.. Functionally, endonuclease that specifically degrades the RNA of RNA-DNA hybrids. This Bacillus thuringiensis (strain Al Hakam) protein is Ribonuclease HII.